A 131-amino-acid chain; its full sequence is ER membrane protein complex subunit 5 (131 aa).

At 1–3 the chain is on the cytoplasmic side; that stretch reads MAP. Residues 4–22 form a helical membrane-spanning segment; sequence SLWKGLVGIGLFALAHAAF. Topologically, residues 23–43 are lumenal; that stretch reads SAAQHRSYMRLTEKEDESLPI. The helical transmembrane segment at 44–63 threads the bilayer; it reads DIVLQTLLAFAVTCYGIVHI. Residues 64–131 are Cytoplasmic-facing; it reads AGEFKDMDAT…KLRKLESLRR (68 aa). The residue at position 120 (Ser-120) is a Phosphoserine.

It belongs to the membrane magnesium transporter (TC 1.A.67) family. Component of the ER membrane protein complex (EMC).

It localises to the endoplasmic reticulum membrane. Its subcellular location is the golgi apparatus membrane. The protein resides in the early endosome membrane. In terms of biological role, part of the endoplasmic reticulum membrane protein complex (EMC) that enables the energy-independent insertion into endoplasmic reticulum membranes of newly synthesized membrane proteins. Preferentially accommodates proteins with transmembrane domains that are weakly hydrophobic or contain destabilizing features such as charged and aromatic residues. Involved in the cotranslational insertion of multi-pass membrane proteins in which stop-transfer membrane-anchor sequences become ER membrane spanning helices. It is also required for the post-translational insertion of tail-anchored/TA proteins in endoplasmic reticulum membranes. By mediating the proper cotranslational insertion of N-terminal transmembrane domains in an N-exo topology, with translocated N-terminus in the lumen of the ER, controls the topology of multi-pass membrane proteins like the G protein-coupled receptors. By regulating the insertion of various proteins in membranes, it is indirectly involved in many cellular processes. May be involved in Mg(2+) transport. This chain is ER membrane protein complex subunit 5, found in Homo sapiens (Human).